A 282-amino-acid polypeptide reads, in one-letter code: Acetyl-coenzyme A carboxylase carboxyl transferase subunit beta (282 aa).

The 254-residue stretch at Leu29–Asp282 folds into the CoA carboxyltransferase N-terminal domain. Zn(2+) contacts are provided by Cys33, Cys36, Cys51, and Cys54. A C4-type zinc finger spans residues Cys33–Cys54.

The protein belongs to the AccD/PCCB family. As to quaternary structure, acetyl-CoA carboxylase is a heterohexamer composed of biotin carboxyl carrier protein (AccB), biotin carboxylase (AccC) and two subunits each of ACCase subunit alpha (AccA) and ACCase subunit beta (AccD). Zn(2+) is required as a cofactor.

It is found in the cytoplasm. It carries out the reaction N(6)-carboxybiotinyl-L-lysyl-[protein] + acetyl-CoA = N(6)-biotinyl-L-lysyl-[protein] + malonyl-CoA. The protein operates within lipid metabolism; malonyl-CoA biosynthesis; malonyl-CoA from acetyl-CoA: step 1/1. Its function is as follows. Component of the acetyl coenzyme A carboxylase (ACC) complex. Biotin carboxylase (BC) catalyzes the carboxylation of biotin on its carrier protein (BCCP) and then the CO(2) group is transferred by the transcarboxylase to acetyl-CoA to form malonyl-CoA. The polypeptide is Acetyl-coenzyme A carboxylase carboxyl transferase subunit beta (Limosilactobacillus fermentum (strain NBRC 3956 / LMG 18251) (Lactobacillus fermentum)).